Reading from the N-terminus, the 466-residue chain is Phosphomethylpyrimidine synthase (466 aa).

Substrate is bound by residues Asn80, Met109, Tyr139, His175, 195-197, 236-239, and Glu275; these read SRG and DSLR. His279 contributes to the Zn(2+) binding site. A substrate-binding site is contributed by Tyr302. His343 contacts Zn(2+). [4Fe-4S] cluster is bound by residues Cys423, Cys426, and Cys431.

It belongs to the ThiC family. [4Fe-4S] cluster is required as a cofactor.

It catalyses the reaction 5-amino-1-(5-phospho-beta-D-ribosyl)imidazole + S-adenosyl-L-methionine = 4-amino-2-methyl-5-(phosphooxymethyl)pyrimidine + CO + 5'-deoxyadenosine + formate + L-methionine + 3 H(+). It functions in the pathway cofactor biosynthesis; thiamine diphosphate biosynthesis. Its function is as follows. Catalyzes the synthesis of the hydroxymethylpyrimidine phosphate (HMP-P) moiety of thiamine from aminoimidazole ribotide (AIR) in a radical S-adenosyl-L-methionine (SAM)-dependent reaction. The chain is Phosphomethylpyrimidine synthase from Synechococcus sp. (strain CC9902).